Reading from the N-terminus, the 150-residue chain is Protein-export protein SecB (150 aa).

It belongs to the SecB family. In terms of assembly, homotetramer, a dimer of dimers. One homotetramer interacts with 1 SecA dimer.

The protein localises to the cytoplasm. In terms of biological role, one of the proteins required for the normal export of preproteins out of the cell cytoplasm. It is a molecular chaperone that binds to a subset of precursor proteins, maintaining them in a translocation-competent state. It also specifically binds to its receptor SecA. This Polaromonas sp. (strain JS666 / ATCC BAA-500) protein is Protein-export protein SecB.